The following is a 192-amino-acid chain: Molybdenum cofactor guanylyltransferase (192 aa).

GTP is bound by residues 10–12, Lys-23, Asn-51, Asp-69, and Asp-99; that span reads LAG. Residue Asp-99 coordinates Mg(2+).

The protein belongs to the MobA family. Monomer. It depends on Mg(2+) as a cofactor.

Its subcellular location is the cytoplasm. The enzyme catalyses Mo-molybdopterin + GTP + H(+) = Mo-molybdopterin guanine dinucleotide + diphosphate. Functionally, transfers a GMP moiety from GTP to Mo-molybdopterin (Mo-MPT) cofactor (Moco or molybdenum cofactor) to form Mo-molybdopterin guanine dinucleotide (Mo-MGD) cofactor. This is Molybdenum cofactor guanylyltransferase from Haemophilus influenzae (strain ATCC 51907 / DSM 11121 / KW20 / Rd).